A 298-amino-acid chain; its full sequence is Putative cysteine protease YopT-like blr2058 (298 aa).

Over residues methionine 1–glutamine 14 the composition is skewed to basic and acidic residues. Disordered regions lie at residues methionine 1–serine 25 and serine 59–serine 80. The span at serine 65 to serine 80 shows a compositional bias: low complexity. Residue cysteine 109 is part of the active site. Positions asparagine 137–glycine 162 are enriched in basic and acidic residues. The interval asparagine 137–phenylalanine 166 is disordered. Catalysis depends on residues histidine 223 and aspartate 238.

This sequence belongs to the peptidase C58 family.

Its function is as follows. Potential cysteine protease, which may play a central role after invasion of host cell. The sequence is that of Putative cysteine protease YopT-like blr2058 from Bradyrhizobium diazoefficiens (strain JCM 10833 / BCRC 13528 / IAM 13628 / NBRC 14792 / USDA 110).